We begin with the raw amino-acid sequence, 743 residues long: Phosphoribosylformylglycinamidine synthase subunit PurL (743 aa).

Residue H54 is part of the active site. Y57 and K96 together coordinate ATP. E98 serves as a coordination point for Mg(2+). Residues 99–102 (SHNH) and R121 each bind substrate. Residue H100 is the Proton acceptor of the active site. D122 is a binding site for Mg(2+). Q245 is a substrate binding site. Residue D273 participates in Mg(2+) binding. Position 317–319 (317–319 (ESQ)) interacts with substrate. Residues D501 and G538 each contribute to the ATP site. Mg(2+) is bound at residue N539. Substrate is bound at residue S541.

Belongs to the FGAMS family. Monomer. Part of the FGAM synthase complex composed of 1 PurL, 1 PurQ and 2 PurS subunits.

The protein resides in the cytoplasm. It catalyses the reaction N(2)-formyl-N(1)-(5-phospho-beta-D-ribosyl)glycinamide + L-glutamine + ATP + H2O = 2-formamido-N(1)-(5-O-phospho-beta-D-ribosyl)acetamidine + L-glutamate + ADP + phosphate + H(+). The protein operates within purine metabolism; IMP biosynthesis via de novo pathway; 5-amino-1-(5-phospho-D-ribosyl)imidazole from N(2)-formyl-N(1)-(5-phospho-D-ribosyl)glycinamide: step 1/2. Its function is as follows. Part of the phosphoribosylformylglycinamidine synthase complex involved in the purines biosynthetic pathway. Catalyzes the ATP-dependent conversion of formylglycinamide ribonucleotide (FGAR) and glutamine to yield formylglycinamidine ribonucleotide (FGAM) and glutamate. The FGAM synthase complex is composed of three subunits. PurQ produces an ammonia molecule by converting glutamine to glutamate. PurL transfers the ammonia molecule to FGAR to form FGAM in an ATP-dependent manner. PurS interacts with PurQ and PurL and is thought to assist in the transfer of the ammonia molecule from PurQ to PurL. The polypeptide is Phosphoribosylformylglycinamidine synthase subunit PurL (Halalkalibacterium halodurans (strain ATCC BAA-125 / DSM 18197 / FERM 7344 / JCM 9153 / C-125) (Bacillus halodurans)).